The sequence spans 426 residues: Putative nickel insertion protein (426 aa).

The protein belongs to the LarC family.

The sequence is that of Putative nickel insertion protein from Nostoc sp. (strain PCC 7120 / SAG 25.82 / UTEX 2576).